Reading from the N-terminus, the 305-residue chain is GMP synthase [glutamine-hydrolyzing] subunit B (305 aa).

A GMPS ATP-PPase domain is found at 2-184 (VKTEKFIQKS…LGLPPEIQHR (183 aa)). 29–35 (SGGVDSS) contributes to the ATP binding site.

Heterodimer composed of a glutamine amidotransferase subunit (A) and a GMP-binding subunit (B).

It catalyses the reaction XMP + L-glutamine + ATP + H2O = GMP + L-glutamate + AMP + diphosphate + 2 H(+). Its pathway is purine metabolism; GMP biosynthesis; GMP from XMP (L-Gln route): step 1/1. In terms of biological role, catalyzes the synthesis of GMP from XMP. The sequence is that of GMP synthase [glutamine-hydrolyzing] subunit B from Methanoregula boonei (strain DSM 21154 / JCM 14090 / 6A8).